The chain runs to 327 residues: Polyprenyl transferase esdpC (327 aa).

8 consecutive transmembrane segments (helical) span residues 35–54 (YNPL…AGAS), 73–93 (LLVF…NDWI), 118–138 (EALI…AYTL), 140–160 (GHNV…YPFG), 171–191 (YPQY…WLAI), 202–222 (IMES…LNTA), 239–259 (VYFL…ALVL), and 307–327 (ENFA…LLKS).

This sequence belongs to the UbiA prenyltransferase family. It depends on Mg(2+) as a cofactor.

It is found in the membrane. Its pathway is secondary metabolite biosynthesis; terpenoid biosynthesis. Functionally, olyprenyl transferase; part of the cluster that mediates the biosynthesis of shearones, diterpenoid pyrones (DPs) which are structurally diverse meroterpenoids consisting of a diterpene linked by a pyrone, and which may exhibit a range of bioactivities. Within the pathway, esdpC takes part to the biosynthesis of the molecular scaffold by catalyzing the C-3 geranylgeranylation reaction of the alpha-pyrone produced by esdpA. The molecular scaffold is commonly biosynthesized by a series of enzymes including the non-reducing polyketide synthase (NR-PKS) esdpA that generates an alpha-pyrone; the prenyltransferase esdpC that attaches a geranylgeranyl pyrophosphate (GGPP) produced by the GGPP synthase (GGPPS) esdpD onto the pyrone unit; the FAD-dependent monooxygenase esdpE that converts an olefin on the diterpene unit into an epoxide; and the terpene cyclase esdpB that catalyzes the cyclization reactions to give the molecular backbone shearone A. In the modification steps, esdpF oxidizes the hydroxy group to a ketone at C-3 and esdpG then attaches hydroxy groups at both C-11 and C-12. After that, esdpI hydroxylates at C-20 and esdpH hydroxylates at C-6'. The ether bridge is generated by nucleophilic attack of the hydroxy group at C-20 to the carbonyl carbon at C-3. EsdpH can also functions prior to esdpI. The different combinations of these modification enzymes lead to the production of diverse shearone derivatives, shearone I being the end product of the pathway. The alpha-ketoglutarate-dependent dioxygenase esdpJ seems not to be involved in this pathway. In Penicillium shearii (Eupenicillium shearii), this protein is Polyprenyl transferase esdpC.